The sequence spans 194 residues: uncharacterized protein (194 aa).

The segment at 25 to 156 is disordered; it reads PSWACRRGGP…ESPLGTLPCS (132 aa). Positions 43–57 are enriched in polar residues; that stretch reads GPSTVPVTPTAGSCQ. Residues 104 to 113 are compositionally biased toward low complexity; that stretch reads SSSPGPSFHL.

This is an uncharacterized protein from Homo sapiens (Human).